Consider the following 155-residue polypeptide: Putative pre-16S rRNA nuclease (155 aa).

The segment at 136–155 is disordered; sequence DAERATSRPPGHPVEPRIGP.

The protein belongs to the YqgF nuclease family.

It is found in the cytoplasm. In terms of biological role, could be a nuclease involved in processing of the 5'-end of pre-16S rRNA. The protein is Putative pre-16S rRNA nuclease of Leifsonia xyli subsp. xyli (strain CTCB07).